We begin with the raw amino-acid sequence, 251 residues long: Hydroxypyruvate/pyruvate aldolase (251 aa).

The Proton acceptor role is filled by H44. R69 provides a ligand contact to 3-hydroxypyruvate. Position 145 (E145) interacts with Mg(2+). 3-hydroxypyruvate-binding residues include T170 and D171. Residue D171 participates in Mg(2+) binding.

This sequence belongs to the HpcH/HpaI aldolase family. Homohexamer. Trimer of homodimers. It depends on Mn(2+) as a cofactor. Mg(2+) is required as a cofactor. The cofactor is Co(2+). Zn(2+) serves as cofactor.

The enzyme catalyses D-glyceraldehyde + 3-hydroxypyruvate = 2-dehydro-D-galactonate. It carries out the reaction D-glyceraldehyde + pyruvate = 2-dehydro-3-deoxy-L-galactonate. It catalyses the reaction L-glyceraldehyde + 3-hydroxypyruvate = (3S,4S,5S)-3,4,5,6-tetrahydroxy-2-oxohexanoate. The catalysed reaction is (R)-lactaldehyde + 3-hydroxypyruvate = (3S,4S,5R)-3,4,5-trihydroxy-2-oxohexanoate. The enzyme catalyses (R)-lactaldehyde + 3-hydroxypyruvate = (3S,4R,5R)-3,4,5-trihydroxy-2-oxohexanoate. It carries out the reaction (S)-lactaldehyde + 3-hydroxypyruvate = (3S,4S,5S)-3,4,5-trihydroxy-2-oxohexanoate. It catalyses the reaction D-erythrose + 3-hydroxypyruvate = (3S,4S,5R,6R)-3,4,5,6,7-pentahydroxy-2-oxoheptanoate. With respect to regulation, binding of substrate induces a dynamic movement of the metal cofactor between an inactive coordination sphere to a catalytically active one. When oxaloacetate is used as substrate, activity is increased in the presence of micromolar concentrations of inorganic phosphate. The phosphate does not improve the binding of the substrate, but exclusively increases its rate of decarboxylation. Excessive phosphate concentrations negatively affect the reaction rate by removing the metal cofactor. In terms of biological role, aldolase which can catalyze in vitro the aldolisation reaction between hydroxypyruvate (HPA) or pyruvate (PA) and D-glyceraldehyde (D-GA). The condensation of hydroxypyruvate and D-glyceraldehyde produces 2-dehydro-D-galactonate as the major product. The condensation of pyruvate and D-glyceraldehyde produces 2-dehydro-3-deoxy-L-galactonate. Can use other electrophilic substrates such as L-glyceraldehyde, D- and L-lactaldehyde and D-erythrose. Also catalyzes the retro-aldol type decarboxylation of oxaloacetate, a general property of known pyruvate aldolases. This chain is Hydroxypyruvate/pyruvate aldolase, found in Rhizorhabdus wittichii (strain DSM 6014 / CCUG 31198 / JCM 15750 / NBRC 105917 / EY 4224 / RW1) (Sphingomonas wittichii).